The following is a 157-amino-acid chain: Serine-protein kinase RsbW (157 aa).

Belongs to the anti-sigma-factor family.

The enzyme catalyses L-seryl-[protein] + ATP = O-phospho-L-seryl-[protein] + ADP + H(+). It catalyses the reaction L-threonyl-[protein] + ATP = O-phospho-L-threonyl-[protein] + ADP + H(+). Functionally, negative regulator of sigma-B activity. Phosphorylates and inactivates its specific antagonist protein, RsbV. Upon phosphorylation of RsbV, RsbW is released and binds to sigma-B, thereby blocking its ability to form an RNA polymerase holoenzyme (E-sigma-B). The sequence is that of Serine-protein kinase RsbW from Listeria monocytogenes serovar 1/2a (strain ATCC BAA-679 / EGD-e).